Reading from the N-terminus, the 351-residue chain is GDSL esterase/lipase At3g14820 (351 aa).

The signal sequence occupies residues methionine 1 to alanine 22. The N-linked (GlcNAc...) asparagine glycan is linked to asparagine 25. The Nucleophile role is filled by serine 39. Catalysis depends on residues aspartate 325 and histidine 328.

It belongs to the 'GDSL' lipolytic enzyme family.

Its subcellular location is the secreted. The polypeptide is GDSL esterase/lipase At3g14820 (Arabidopsis thaliana (Mouse-ear cress)).